The primary structure comprises 3341 residues: Genome polyprotein (3341 aa).

Basic and acidic residues-rich tracts occupy residues 1-14 and 24-35; these read MKRKDLEARGKAPG and REGRRKDKDKGG. Residues 1–57 are disordered; that stretch reads MKRKDLEARGKAPGRDSSTPFWGREGRRKDKDKGGESPSNRQVTLKTPIQSGRRAGK. Topologically, residues 1–120 are cytoplasmic; the sequence is MKRKDLEARG…LESRRTTGNP (120 aa). Polar residues predominate over residues 37-50; it reads SPSNRQVTLKTPIQ. The interval 55 to 97 is hydrophobic; homodimerization of capsid protein C; that stretch reads AGKRQRVGLLGRLGVGWGSFLQEDIVQALIHMALVLHALFASI. Residues 117 to 136 constitute a propeptide, ER anchor for the capsid protein C, removed in mature form by serine protease NS3; sequence TGNPMTLAFILGFLTVLCGC. Residues 121–141 traverse the membrane as a helical segment; it reads MTLAFILGFLTVLCGCVVIDM. Residues 142 to 245 lie on the Extracellular side of the membrane; the sequence is QVSTTRGTEI…AFKTIRENKT (104 aa). Residues asparagine 157 and asparagine 243 are each glycosylated (N-linked (GlcNAc...) asparagine; by host). The chain crosses the membrane as a helical span at residues 246–262; the sequence is IFIVALLCVAIAKRWPT. Tryptophan 263 is a topological domain (cytoplasmic). The helical transmembrane segment at 264–278 threads the bilayer; the sequence is VVILLAIGTWTTVKG. At 279–665 the chain is on the extracellular side; that stretch reads EFVEPLYTLK…GVWQDLVGKF (387 aa). Residue asparagine 339 is glycosylated (N-linked (GlcNAc...) asparagine; by host). The tract at residues 371 to 384 is involved in fusion; the sequence is NRGWGTGCFKWGIG. 4 N-linked (GlcNAc...) asparagine; by host glycosylation sites follow: asparagine 399, asparagine 411, asparagine 575, and asparagine 611. Residues 666-686 form a helical membrane-spanning segment; sequence SVGAFFSNTALLVILVLAALI. The Cytoplasmic segment spans residues 687–689; sequence DKR. A helical transmembrane segment spans residues 690–705; sequence IAFLLVLGGYFYYVRA. Residues 706-1138 lie on the Extracellular side of the membrane; sequence DLGCGIDTTR…AKTRTSTLTR (433 aa). Residues asparagine 794, asparagine 896, asparagine 993, and asparagine 1027 are each glycosylated (N-linked (GlcNAc...) asparagine; by host). A helical transmembrane segment spans residues 1139-1159; the sequence is LFLTILAMALFGLPNLFSSVG. Topologically, residues 1160-1178 are cytoplasmic; sequence LSAWVLLVASSSAQPQDLS. Residues 1179-1199 traverse the membrane as a helical segment; the sequence is MNLWIVLQTGSSAVLLLGYMI. Residues 1200–1204 lie on the Lumenal side of the membrane; the sequence is RRKLA. The chain crosses the membrane as a helical span at residues 1205-1225; that stretch reads MVLGVHHLVTLMCVQFLFSAV. Topologically, residues 1226–1231 are cytoplasmic; the sequence is DRYQKY. The helical transmembrane segment at 1232–1252 threads the bilayer; it reads LYGLLELMASVVLLSAYKSVL. At 1253 to 1261 the chain is on the lumenal side; the sequence is QALPPEVLC. The chain crosses the membrane as a helical span at residues 1262–1282; that stretch reads FSLVMGWKTALSLATVVFLIF. Residues 1283–1303 lie on the Cytoplasmic side of the membrane; that stretch reads SLNAMYKYACQYHNPRNGYRD. Residues 1304–1324 form a helical membrane-spanning segment; that stretch reads SGANLWFWTVSLASAGGIWAA. Topologically, residues 1325 to 1326 are lumenal; the sequence is EK. A helical transmembrane segment spans residues 1327 to 1347; the sequence is AHQPTVAAVLAFTMVVLFLYM. Residues 1348-1403 lie on the Cytoplasmic side of the membrane; sequence EQTNVSMELEFISAGETPEGVSTENDDGINIPDLKGRYGEDGIVVGAASSSGYLPE. Residues 1404-1424 constitute an intramembrane region (helical); the sequence is LVFVFLLGFAVTSTSYFLGAL. At 1425 to 2089 the chain is on the cytoplasmic side; it reads YLLIATSTNL…TERSLTVVMA (665 aa). Residues 1452–1630 enclose the Peptidase S7 domain; the sequence is SDDLLGLGGP…KPTDVTESLN (179 aa). Catalysis depends on charge relay system; for serine protease NS3 activity residues histidine 1506, aspartate 1530, and serine 1589. One can recognise a Helicase ATP-binding domain in the interval 1627 to 1780; it reads ESLNCDSTRR…SNYAISDQSI (154 aa). Residue 1640–1647 participates in ATP binding; that stretch reads WHPGKGKT. The short motif at 1729–1732 is the DECH box element; sequence DECH. The Helicase C-terminal domain occupies 1793–1947; it reads NVQKSVGAKK…TFMLEEAAYS (155 aa). The helical transmembrane segment at 2090-2110 threads the bilayer; that stretch reads FVLGVSIMLSCFIAVWALCFL. The Lumenal portion of the chain corresponds to 2111–2145; it reads FSLFRPKKATYEQMPSSDPLSGGVLVSTPSVLYCM. The helical transmembrane segment at 2146–2166 threads the bilayer; that stretch reads GVPLGFCVVITLAMFLVYPVL. Residues 2167 to 2178 are Cytoplasmic-facing; sequence YKSIGNRSYMDS. The chain crosses the membrane as a helical span at residues 2179 to 2199; it reads DLVKWVILGSCLICGVLAWEM. Over 2200–2242 the chain is Lumenal; the sequence is RMFPNIRSDLMELVKAVKEPEEVVNSGPSFPSWEIAQGKGATM. A helical membrane pass occupies residues 2243–2263; sequence LDSLQVFFFITVLSTKFLYWF. Residues 2264-2302 lie on the Cytoplasmic side of the membrane; that stretch reads QENWTARMYAMKHPEMVSSIGGFRFDEIPFRAVLPSGFA. An intramembrane region (helical) is located at residues 2303–2323; that stretch reads IVAIASLPSVVVGLLAAGVFM. At 2324 to 2366 the chain is on the cytoplasmic side; the sequence is AIMYCQNKWNATPKILTALDARDQRHDRPTEITSRVPLENTRS. A helical transmembrane segment spans residues 2367–2387; it reads IMYAFCLIFSLFWAFCTRSPG. At 2388 to 2412 the chain is on the lumenal side; the sequence is DFLRGSLVVGASMWQILHPRSKIHD. Residues 2413-2433 traverse the membrane as a helical segment; the sequence is VMDFGSMVSAIGLLEMNYLFY. Residues 2434-3341 lie on the Cytoplasmic side of the membrane; the sequence is RFMHIAARAL…SRYRRGNDVI (908 aa). The mRNA cap 0-1 NS5-type MT domain occupies 2454 to 2706; that stretch reads ALEKSTTIGL…SPVLPKGTRA (253 aa). Serine 2497 serves as a coordination point for S-adenosyl-L-methionine. Catalysis depends on lysine 2509, which acts as the For 2'-O-MTase activity. The S-adenosyl-L-methionine site is built by glycine 2527, tryptophan 2528, threonine 2545, isoleucine 2546, aspartate 2572, and valine 2573. Aspartate 2587 serves as the catalytic For 2'-O-MTase activity. Position 2588 (isoleucine 2588) interacts with S-adenosyl-L-methionine. Active-site for 2'-O-MTase activity residues include lysine 2624 and glutamate 2660. Tyrosine 2662 contacts S-adenosyl-L-methionine. 4 residues coordinate Zn(2+): glutamate 2881, histidine 2885, cysteine 2890, and cysteine 2893. The RdRp catalytic domain occupies 2970–3117; it reads KYLIADDIAG…STDNRDFSSA (148 aa). 3 residues coordinate Zn(2+): histidine 3152, cysteine 3168, and cysteine 3287.

In the N-terminal section; belongs to the class I-like SAM-binding methyltransferase superfamily. mRNA cap 0-1 NS5-type methyltransferase family. In terms of assembly, homodimer. Forms heterodimers with envelope protein E in the endoplasmic reticulum and Golgi. As to quaternary structure, homodimer; in the endoplasmic reticulum and Golgi. In terms of assembly, forms homodimers as well as homohexamers. NS1 may interact with NS4A. Forms a heterodimer with serine protease NS3. May form homooligomers. As to quaternary structure, forms a heterodimer with NS2B. Interacts with NS4B. Interacts with unphosphorylated RNA-directed RNA polymerase NS5; this interaction stimulates RNA-directed RNA polymerase NS5 guanylyltransferase activity. In terms of assembly, interacts with serine protease NS3. Interacts with host STAT2; this interaction inhibits the phosphorylation of the latter, and, when all viral proteins are present (polyprotein), targets STAT2 for degradation. In terms of processing, genome polyprotein: Specific enzymatic cleavages in vivo yield mature proteins. Cleavages in the lumen of endoplasmic reticulum are performed by host signal peptidase, whereas cleavages in the cytoplasmic side are performed by serine protease NS3. Signal cleavage at the 2K-4B site requires a prior NS3 protease-mediated cleavage at the 4A-2K site. Cleaved in post-Golgi vesicles by a host furin, releasing the mature small envelope protein M, and peptide pr. This cleavage is incomplete as up to 30% of viral particles still carry uncleaved prM. Post-translationally, N-glycosylated. In terms of processing, N-glycosylated. The excreted form is glycosylated and this is required for efficient secretion of the protein from infected cells. Phosphorylated on serines residues. This phosphorylation may trigger NS5 nuclear localization.

The protein localises to the virion. The protein resides in the host nucleus. It localises to the secreted. Its subcellular location is the virion membrane. It is found in the host endoplasmic reticulum membrane. It carries out the reaction Selective hydrolysis of -Xaa-Xaa-|-Yaa- bonds in which each of the Xaa can be either Arg or Lys and Yaa can be either Ser or Ala.. It catalyses the reaction RNA(n) + a ribonucleoside 5'-triphosphate = RNA(n+1) + diphosphate. The catalysed reaction is a ribonucleoside 5'-triphosphate + H2O = a ribonucleoside 5'-diphosphate + phosphate + H(+). The enzyme catalyses ATP + H2O = ADP + phosphate + H(+). It carries out the reaction a 5'-end (5'-triphosphoguanosine)-ribonucleoside in mRNA + S-adenosyl-L-methionine = a 5'-end (N(7)-methyl 5'-triphosphoguanosine)-ribonucleoside in mRNA + S-adenosyl-L-homocysteine. It catalyses the reaction a 5'-end (N(7)-methyl 5'-triphosphoguanosine)-ribonucleoside in mRNA + S-adenosyl-L-methionine = a 5'-end (N(7)-methyl 5'-triphosphoguanosine)-(2'-O-methyl-ribonucleoside) in mRNA + S-adenosyl-L-homocysteine + H(+). Plays a role in virus budding by binding to the cell membrane and gathering the viral RNA into a nucleocapsid that forms the core of a mature virus particle. During virus entry, may induce genome penetration into the host cytoplasm after hemifusion induced by the surface proteins. Can migrate to the cell nucleus where it modulates host functions. In terms of biological role, prevents premature fusion activity of envelope proteins in trans-Golgi by binding to envelope protein E at pH6.0. After virion release in extracellular space, gets dissociated from E dimers. Functionally, acts as a chaperone for envelope protein E during intracellular virion assembly by masking and inactivating envelope protein E fusion peptide. prM is the only viral peptide matured by host furin in the trans-Golgi network probably to avoid catastrophic activation of the viral fusion activity in acidic Golgi compartment prior to virion release. prM-E cleavage is inefficient, and many virions are only partially matured. These uncleaved prM would play a role in immune evasion. Its function is as follows. May play a role in virus budding. Exerts cytotoxic effects by activating a mitochondrial apoptotic pathway through M ectodomain. May display a viroporin activity. Binds to host cell surface receptor and mediates fusion between viral and cellular membranes. Envelope protein is synthesized in the endoplasmic reticulum in the form of heterodimer with protein prM. They play a role in virion budding in the ER, and the newly formed immature particle is covered with 60 spikes composed of heterodimer between precursor prM and envelope protein E. The virion is transported to the Golgi apparatus where the low pH causes dissociation of PrM-E heterodimers and formation of E homodimers. prM-E cleavage is inefficient, and many virions are only partially matured. These uncleaved prM would play a role in immune evasion. In terms of biological role, involved in immune evasion, pathogenesis and viral replication. Once cleaved off the polyprotein, is targeted to three destinations: the viral replication cycle, the plasma membrane and the extracellular compartment. May play a role in viral genome replication. Assist membrane bending and envelopment of genomic RNA at the endoplasmic reticulum. Excreted as a hexameric lipoparticle that plays a role against host immune response. Functionally, component of the viral RNA replication complex that functions in virion assembly and antagonizes the host immune response. Its function is as follows. Required cofactor for the serine protease function of NS3. May have membrane-destabilizing activity and form viroporins. Displays three enzymatic activities: serine protease, NTPase and RNA helicase. NS3 serine protease, in association with NS2B, performs its autocleavage and cleaves the polyprotein at dibasic sites in the cytoplasm: C-prM, NS2A-NS2B, NS2B-NS3, NS3-NS4A, NS4A-2K and NS4B-NS5. NS3 RNA helicase binds RNA and unwinds dsRNA in the 3' to 5' direction. In terms of biological role, regulates the ATPase activity of the NS3 helicase activity. NS4A allows NS3 helicase to conserve energy during unwinding. Functionally, functions as a signal peptide for NS4B and is required for the interferon antagonism activity of the latter. Its function is as follows. Inhibits interferon (IFN)-induced host STAT1 phosphorylation and nuclear translocation, thereby preventing the establishment of a cellular antiviral state by blocking the IFN-alpha/beta pathway. Replicates the viral (+) and (-) RNA genome, and performs the capping of genomes in the cytoplasm. NS5 methylates viral RNA cap at guanine N-7 and ribose 2'-O positions. Besides its role in RNA genome replication, also prevents the establishment of cellular antiviral state by blocking the interferon-alpha/beta (IFN-alpha/beta) signaling pathway. Inhibits host TYK2 and STAT2 phosphorylation, thereby preventing activation of JAK-STAT signaling pathway. This Aedes (CFA flavivirus) protein is Genome polyprotein.